A 342-amino-acid chain; its full sequence is Nuclear distribution protein nudE homolog 1 (342 aa).

Residues Arg-45–Lys-189 are a coiled coil. The interaction with PAFAH1B1 stretch occupies residues Glu-89–Leu-157. Disordered stretches follow at residues Ala-182–Thr-203 and Gly-320–Leu-342. The span at Arg-322–Leu-342 shows a compositional bias: polar residues.

The protein belongs to the nudE family. Self-associates. Interacts with PAFAH1B1. Phosphorylated in mitosis.

It is found in the cytoplasm. It localises to the cytoskeleton. Its subcellular location is the microtubule organizing center. The protein resides in the centrosome. The protein localises to the spindle. It is found in the chromosome. It localises to the centromere. Its subcellular location is the kinetochore. The protein resides in the cleavage furrow. The protein localises to the cytoplasmic vesicle membrane. In terms of biological role, required for centrosome duplication and formation and function of the mitotic spindle. In Gallus gallus (Chicken), this protein is Nuclear distribution protein nudE homolog 1 (NDE1).